A 254-amino-acid polypeptide reads, in one-letter code: MDGGDDGNLIIKKRFVSEAELDERRKRRQEEWEKVRKPEDPEECPEEVYDPRSLYERLQEQKDRKQQEYEEQFKFKNMVRGLDEDETNFLDEVSRQQELIEKQRREEELKELKEYRNNLKKVGISQENKKEVEKKLTVKPIETKNKFSQAKLLAGAVKHKSSESGNSVKRLKPDPEPDDKNQEPSSCKSLGNTSLSGPSIHCPSAAVCIGILPGLGAYSGSSDSESSSDSEGTINATGKIVSSIFRTNTFLEAP.

M1 carries the post-translational modification N-acetylmethionine. Residue S17 is modified to Phosphoserine. Residues 22 to 39 (DERRKRRQEEWEKVRKPE) show a composition bias toward basic and acidic residues. The segment at 22–52 (DERRKRRQEEWEKVRKPEDPEECPEEVYDPR) is disordered. N6-acetyllysine is present on K139. The disordered stretch occupies residues 155-195 (GAVKHKSSESGNSVKRLKPDPEPDDKNQEPSSCKSLGNTSL). Basic and acidic residues predominate over residues 171 to 182 (LKPDPEPDDKNQ). A compositionally biased stretch (polar residues) spans 183–195 (EPSSCKSLGNTSL). An interaction with PSME3 region spans residues 201-254 (HCPSAAVCIGILPGLGAYSGSSDSESSSDSEGTINATGKIVSSIFRTNTFLEAP). Phosphoserine; by CK2 occurs at positions 222 and 228.

In terms of assembly, interacts (via C-terminus) with both free and 20S proteasome-bound forms of the proteasome activator complex subunit PSME3; the interaction is direct. In terms of processing, phosphorylation by CK2 stabilizes the interaction with PSME3.

It localises to the nucleus. Its function is as follows. Promotes the association of the proteasome activator complex subunit PSME3 with the 20S proteasome and regulates its activity. Inhibits PSME3-mediated degradation of some proteasome substrates, probably by affecting their diffusion rate into the catalytic chamber of the proteasome. Also inhibits the interaction of PSME3 with COIL, inhibits accumulation of PSME3 in Cajal bodies and positively regulates the number of Cajal bodies in the nucleus. This Homo sapiens (Human) protein is PSME3-interacting protein.